The sequence spans 964 residues: Translation initiation factor IF-2 (964 aa).

The tract at residues 35–353 (ASSTIEPPVV…RQKRNEYESM (319 aa)) is disordered. Residues 64 to 108 (KPTPAKPAAKPGAPAPKPGTAQKPTAPTPGAVAAPKPGTAAAKPT) show a composition bias toward low complexity. A compositionally biased stretch (pro residues) spans 124 to 133 (PAKPTAPKPA). Residues 145-155 (AAKKAAEDKAT) show a composition bias toward basic and acidic residues. Over residues 166 to 178 (NAMPRPMAKPGPK) the composition is skewed to pro residues. Positions 220–233 (PRPQGGQRSGAPRD) are enriched in low complexity. Composition is skewed to gly residues over residues 234 to 252 (GQGG…GPRP) and 290 to 333 (GKGG…GRPG). The segment covering 337–346 (RRGRKSKRQK) has biased composition (basic residues). The tr-type G domain maps to 459–631 (KRPPVVTVMG…VCLTADAELD (173 aa)). The interval 468-475 (GHVDHGKT) is G1. A GTP-binding site is contributed by 468–475 (GHVDHGKT). Residues 493–497 (GITQG) form a G2 region. Residues 518 to 521 (DTPG) form a G3 region. Residues 518-522 (DTPGH) and 572-575 (NKID) contribute to the GTP site. The G4 stretch occupies residues 572-575 (NKID). The G5 stretch occupies residues 608-610 (SAK).

It belongs to the TRAFAC class translation factor GTPase superfamily. Classic translation factor GTPase family. IF-2 subfamily.

Its subcellular location is the cytoplasm. Its function is as follows. One of the essential components for the initiation of protein synthesis. Protects formylmethionyl-tRNA from spontaneous hydrolysis and promotes its binding to the 30S ribosomal subunits. Also involved in the hydrolysis of GTP during the formation of the 70S ribosomal complex. This chain is Translation initiation factor IF-2, found in Corynebacterium efficiens (strain DSM 44549 / YS-314 / AJ 12310 / JCM 11189 / NBRC 100395).